We begin with the raw amino-acid sequence, 388 residues long: Chorismate synthase (388 aa).

Residues Arg-39 and Arg-45 each contribute to the NADP(+) site. Residues 95-115 (EKQKKIRRVSKPRPGHADLVG) are disordered. Positions 98–108 (KKIRRVSKPRP) are enriched in basic residues. FMN contacts are provided by residues 130–132 (RSS), 251–252 (NA), Gly-296, 311–315 (KPIPT), and Arg-337.

This sequence belongs to the chorismate synthase family. In terms of assembly, homotetramer. It depends on FMNH2 as a cofactor.

The enzyme catalyses 5-O-(1-carboxyvinyl)-3-phosphoshikimate = chorismate + phosphate. The protein operates within metabolic intermediate biosynthesis; chorismate biosynthesis; chorismate from D-erythrose 4-phosphate and phosphoenolpyruvate: step 7/7. Catalyzes the anti-1,4-elimination of the C-3 phosphate and the C-6 proR hydrogen from 5-enolpyruvylshikimate-3-phosphate (EPSP) to yield chorismate, which is the branch point compound that serves as the starting substrate for the three terminal pathways of aromatic amino acid biosynthesis. This reaction introduces a second double bond into the aromatic ring system. In Enterococcus faecalis (strain ATCC 700802 / V583), this protein is Chorismate synthase.